We begin with the raw amino-acid sequence, 563 residues long: MNIKIILLSIILIIQLLLLNNNGGIVESKINFSKRKQTDRKPNPSPKTYTKEYYDNKYLKSLKNVKQTPNDFLVTDLPGLDNGILTSFSGLLTTNETSDGNLFFWFFPANETVINPMDAPLLVWLNGGPGCSSMDSVFIETGPLRFIGDSDNSDKFYINPWSWHNSANMLYIDQPFGTGLSFVSDNDGLVTNDLEINQNFYQFIQEFFQIFSNYSTLPFFISGESYAGHYIPHMASYILNMNENLSKDSIKINLQGVAIGNGYTHPTTQINSYREFGYYATGIIGQRQYNNYENLNNLCQEQLSQGNYNSDECANVFNTLLDDSGSSNTSQVNMYDYRLNDPTAGNNWPLPGINQEFVYLNRDDVRSAIHATVTPHQWNECNDTVNGLLTNQDESSLYLFPELLSNIRVLIYNGQFDVICNHVGTTEYLNQIEWDYTQEWSDAPRFTWTSVGTDGSLQSGGYGKTAANLTFVLALGGSHMYPMNMPSTSFDMITRFLKNKSFNDLPQSIGIDAPSTPKPVPLTLGAWIGITVGGCAFGFLVGGLIIYIIMKKSSKNGYYKVIQ.

The signal sequence occupies residues 1–23 (MNIKIILLSIILIIQLLLLNNNG). Topologically, residues 24–529 (GIVESKINFS…VPLTLGAWIG (506 aa)) are extracellular. 4 N-linked (GlcNAc...) asparagine glycosylation sites follow: Asn-31, Asn-95, Asn-110, and Asn-213. Ser-225 is an active-site residue. Residues Asn-244, Asn-328, and Asn-382 are each glycosylated (N-linked (GlcNAc...) asparagine). Residue Asp-417 is part of the active site. Asn-468 carries an N-linked (GlcNAc...) asparagine glycan. Residue His-479 is part of the active site. Asn-499 carries an N-linked (GlcNAc...) asparagine glycan. Residues 530-550 (ITVGGCAFGFLVGGLIIYIIM) traverse the membrane as a helical segment. The Cytoplasmic segment spans residues 551–563 (KKSSKNGYYKVIQ).

The protein belongs to the peptidase S10 family.

It localises to the membrane. Probable carboxypeptidase. The sequence is that of Serine carboxypeptidase S10 family member 2 from Dictyostelium discoideum (Social amoeba).